A 238-amino-acid polypeptide reads, in one-letter code: Small ribosomal subunit protein uS3 (238 aa).

A KH type-2 domain is found at Ile-39–Lys-108.

The protein belongs to the universal ribosomal protein uS3 family. As to quaternary structure, part of the 30S ribosomal subunit. Forms a tight complex with proteins S10 and S14.

Functionally, binds the lower part of the 30S subunit head. Binds mRNA in the 70S ribosome, positioning it for translation. The polypeptide is Small ribosomal subunit protein uS3 (Alkaliphilus oremlandii (strain OhILAs) (Clostridium oremlandii (strain OhILAs))).